We begin with the raw amino-acid sequence, 226 residues long: Thiamine-phosphate synthase (226 aa).

4-amino-2-methyl-5-(diphosphooxymethyl)pyrimidine is bound by residues Q46–K50 and D83. Mg(2+) is bound by residues D84 and D103. 4-amino-2-methyl-5-(diphosphooxymethyl)pyrimidine is bound at residue S122. T149 to S151 contributes to the 2-[(2R,5Z)-2-carboxy-4-methylthiazol-5(2H)-ylidene]ethyl phosphate binding site. K152 lines the 4-amino-2-methyl-5-(diphosphooxymethyl)pyrimidine pocket. 2-[(2R,5Z)-2-carboxy-4-methylthiazol-5(2H)-ylidene]ethyl phosphate contacts are provided by residues G181 and I201–T202.

Belongs to the thiamine-phosphate synthase family. Mg(2+) serves as cofactor.

The catalysed reaction is 2-[(2R,5Z)-2-carboxy-4-methylthiazol-5(2H)-ylidene]ethyl phosphate + 4-amino-2-methyl-5-(diphosphooxymethyl)pyrimidine + 2 H(+) = thiamine phosphate + CO2 + diphosphate. It carries out the reaction 2-(2-carboxy-4-methylthiazol-5-yl)ethyl phosphate + 4-amino-2-methyl-5-(diphosphooxymethyl)pyrimidine + 2 H(+) = thiamine phosphate + CO2 + diphosphate. The enzyme catalyses 4-methyl-5-(2-phosphooxyethyl)-thiazole + 4-amino-2-methyl-5-(diphosphooxymethyl)pyrimidine + H(+) = thiamine phosphate + diphosphate. It participates in cofactor biosynthesis; thiamine diphosphate biosynthesis; thiamine phosphate from 4-amino-2-methyl-5-diphosphomethylpyrimidine and 4-methyl-5-(2-phosphoethyl)-thiazole: step 1/1. In terms of biological role, condenses 4-methyl-5-(beta-hydroxyethyl)thiazole monophosphate (THZ-P) and 2-methyl-4-amino-5-hydroxymethyl pyrimidine pyrophosphate (HMP-PP) to form thiamine monophosphate (TMP). The polypeptide is Thiamine-phosphate synthase (Haemophilus influenzae (strain ATCC 51907 / DSM 11121 / KW20 / Rd)).